The sequence spans 508 residues: UDP-N-acetylmuramyl-tripeptide synthetase (508 aa).

Position 35 (Ser35) interacts with UDP-N-acetyl-alpha-D-muramoyl-L-alanyl-D-glutamate. 118-124 serves as a coordination point for ATP; it reads GTDGKSS. UDP-N-acetyl-alpha-D-muramoyl-L-alanyl-D-glutamate contacts are provided by residues 163-164, Thr190, and Arg200; that span reads ST. Residue Lys232 is modified to N6-carboxylysine.

It belongs to the MurCDEF family. MurE subfamily. In terms of processing, carboxylation is probably crucial for Mg(2+) binding and, consequently, for the gamma-phosphate positioning of ATP.

The protein localises to the cytoplasm. It participates in cell wall biogenesis; peptidoglycan biosynthesis. Functionally, catalyzes the addition of an amino acid to the nucleotide precursor UDP-N-acetylmuramoyl-L-alanyl-D-glutamate (UMAG) in the biosynthesis of bacterial cell-wall peptidoglycan. This chain is UDP-N-acetylmuramyl-tripeptide synthetase, found in Borreliella burgdorferi (strain ATCC 35210 / DSM 4680 / CIP 102532 / B31) (Borrelia burgdorferi).